The sequence spans 62 residues: Photosystem II reaction center protein Z (62 aa).

Transmembrane regions (helical) follow at residues 8 to 28 (AVFA…VVLA) and 41 to 61 (FSGA…NSFV).

This sequence belongs to the PsbZ family. In terms of assembly, PSII is composed of 1 copy each of membrane proteins PsbA, PsbB, PsbC, PsbD, PsbE, PsbF, PsbH, PsbI, PsbJ, PsbK, PsbL, PsbM, PsbT, PsbY, PsbZ, Psb30/Ycf12, at least 3 peripheral proteins of the oxygen-evolving complex and a large number of cofactors. It forms dimeric complexes.

It is found in the plastid. Its subcellular location is the chloroplast thylakoid membrane. May control the interaction of photosystem II (PSII) cores with the light-harvesting antenna, regulates electron flow through the 2 photosystem reaction centers. PSII is a light-driven water plastoquinone oxidoreductase, using light energy to abstract electrons from H(2)O, generating a proton gradient subsequently used for ATP formation. The protein is Photosystem II reaction center protein Z of Zygnema circumcarinatum (Green alga).